The primary structure comprises 201 residues: NADH-quinone oxidoreductase subunit C (201 aa).

This sequence belongs to the complex I 30 kDa subunit family. NDH-1 is composed of 14 different subunits. Subunits NuoB, C, D, E, F, and G constitute the peripheral sector of the complex.

The protein resides in the cell inner membrane. The catalysed reaction is a quinone + NADH + 5 H(+)(in) = a quinol + NAD(+) + 4 H(+)(out). In terms of biological role, NDH-1 shuttles electrons from NADH, via FMN and iron-sulfur (Fe-S) centers, to quinones in the respiratory chain. The immediate electron acceptor for the enzyme in this species is believed to be ubiquinone. Couples the redox reaction to proton translocation (for every two electrons transferred, four hydrogen ions are translocated across the cytoplasmic membrane), and thus conserves the redox energy in a proton gradient. This is NADH-quinone oxidoreductase subunit C from Ruegeria sp. (strain TM1040) (Silicibacter sp.).